A 166-amino-acid polypeptide reads, in one-letter code: MASIEKQTGELQEKLIAVNRVSKTVKGGRIMSFTALTVVGDGNGRVGFGYGKAREVPAAIQKAMEKARRNMITVALNEGTLQHPIKGSHTGSRVFMQPASEGTGIIAGGAMRAVLEVAGVRNVLSKAYGSTNPINVVRATIDALANMKSPEMVAAKRGKTVDEILG.

The 64-residue stretch at 11–74 (LQEKLIAVNR…EKARRNMITV (64 aa)) folds into the S5 DRBM domain.

This sequence belongs to the universal ribosomal protein uS5 family. In terms of assembly, part of the 30S ribosomal subunit. Contacts proteins S4 and S8.

Its function is as follows. With S4 and S12 plays an important role in translational accuracy. In terms of biological role, located at the back of the 30S subunit body where it stabilizes the conformation of the head with respect to the body. The protein is Small ribosomal subunit protein uS5 of Histophilus somni (strain 2336) (Haemophilus somnus).